The following is a 612-amino-acid chain: DNA mismatch repair protein MutL (612 aa).

It belongs to the DNA mismatch repair MutL/HexB family.

Functionally, this protein is involved in the repair of mismatches in DNA. It is required for dam-dependent methyl-directed DNA mismatch repair. May act as a 'molecular matchmaker', a protein that promotes the formation of a stable complex between two or more DNA-binding proteins in an ATP-dependent manner without itself being part of a final effector complex. In Afipia carboxidovorans (strain ATCC 49405 / DSM 1227 / KCTC 32145 / OM5) (Oligotropha carboxidovorans), this protein is DNA mismatch repair protein MutL.